The primary structure comprises 111 residues: Large ribosomal subunit protein uL24 (111 aa).

Belongs to the universal ribosomal protein uL24 family. In terms of assembly, part of the 50S ribosomal subunit.

Functionally, one of two assembly initiator proteins, it binds directly to the 5'-end of the 23S rRNA, where it nucleates assembly of the 50S subunit. Its function is as follows. One of the proteins that surrounds the polypeptide exit tunnel on the outside of the subunit. The polypeptide is Large ribosomal subunit protein uL24 (Myxococcus xanthus (strain DK1622)).